Reading from the N-terminus, the 275-residue chain is Calcium-binding protein 4 (275 aa).

Positions 1-12 are enriched in polar residues; that stretch reads MTTEQARGQQGP. The segment at 1–112 is disordered; the sequence is MTTEQARGQQ…SLHDAAQRTY (112 aa). Basic residues predominate over residues 38–55; it reads TRKRSKKERGLRGSRKRT. S42 bears the Phosphoserine mark. 4 consecutive EF-hand domains span residues 129 to 164, 183 to 200, 206 to 241, and 243 to 275; these read EELD…LGYM, GRVD…KLRE, LGVR…LLGE, and LAGP…LSRH. Positions 142, 144, 146, 148, and 153 each coordinate Ca(2+). Ca(2+)-binding residues include D219, D221, D223, R225, E230, D256, N258, D260, T262, and E267.

Interacts with CACNA1F and CACNA1D (via IQ domain) in a calcium independent manner. Interacts (via N-terminus) with UNC119. In terms of processing, phosphorylated. Phosphorylation levels change with the light conditions and regulate the activity. In terms of tissue distribution, expressed in retina and in the inner hair cells (IHC) of the cochlea.

The protein localises to the cytoplasm. It is found in the presynapse. Its function is as follows. Involved in normal synaptic function through regulation of Ca(2+) influx and neurotransmitter release in photoreceptor synaptic terminals and in auditory transmission. Modulator of CACNA1D and CACNA1F, suppressing the calcium-dependent inactivation and shifting the activation range to more hyperpolarized voltages. This is Calcium-binding protein 4 (CABP4) from Homo sapiens (Human).